A 157-amino-acid polypeptide reads, in one-letter code: Protein TIFY 8 (157 aa).

The Tify domain occupies 33–68 (VPGTTEQLTIFYSGSMVKFDNVPREKIRYACRLRRL). Residues 126–147 (SIGAQRTGTPPSRRRIHARGKS) are disordered. Positions 137-147 (SRRRIHARGKS) are enriched in basic residues.

It belongs to the TIFY/JAZ family. Post-translationally, ubiquitinated. Targeted for degradation by the SCF(COI1) E3 ubiquitin ligase-proteasome pathway during jasmonate signaling.

Its function is as follows. Repressor of jasmonate responses. The sequence is that of Protein TIFY 8 from Oryza sativa subsp. japonica (Rice).